A 182-amino-acid chain; its full sequence is LIM domain-containing protein C (182 aa).

LIM zinc-binding domains lie at 3 to 63 (SICP…LFRQ) and 110 to 170 (TNCP…KFGP).

It is found in the cell projection. The protein resides in the pseudopodium. It localises to the cytoplasm. Its subcellular location is the cell cortex. The protein localises to the cytoskeleton. Its function is as follows. Binds to F-actin and may modulate the chemotactic response during early development and contribute to the maintenance of the strength of the actin cytoskeleton. This chain is LIM domain-containing protein C (limC), found in Dictyostelium discoideum (Social amoeba).